Here is a 681-residue protein sequence, read N- to C-terminus: Protein hook (681 aa).

A Calponin-homology (CH) domain is found at 6–123 (NEMYYSLLEW…RLLQLVLGCA (118 aa)). 2 coiled-coil regions span residues 135-439 (EIMS…LKCG) and 482-584 (QTAL…KYRK).

Belongs to the hook family. As to quaternary structure, homodimer. Interacts with microtubules via its N-terminus.

Its subcellular location is the cytoplasm. It localises to the cytoskeleton. The protein localises to the endosome. It is found in the synapse. In terms of biological role, involved in endocytic trafficking by stabilizing organelles of the endocytic pathway. Probably acts as a cytoskeletal linker protein required to tether endosome vesicles to the cytoskeleton. Involved in modulation of endocytosis at stages required for down-regulation of membrane proteins that control synapse size. Not involved in synaptic vesicle recycling. Required in R7 cells for boss endocytosis into multivesicular bodies (MVBs). Has a role in regulating adult longevity. The chain is Protein hook from Drosophila ananassae (Fruit fly).